A 301-amino-acid chain; its full sequence is Sulfate adenylyltransferase subunit 2 (301 aa).

The protein belongs to the PAPS reductase family. CysD subfamily. As to quaternary structure, heterodimer composed of CysD, the smaller subunit, and CysN.

It carries out the reaction sulfate + ATP + H(+) = adenosine 5'-phosphosulfate + diphosphate. It functions in the pathway sulfur metabolism; hydrogen sulfide biosynthesis; sulfite from sulfate: step 1/3. In terms of biological role, with CysN forms the ATP sulfurylase (ATPS) that catalyzes the adenylation of sulfate producing adenosine 5'-phosphosulfate (APS) and diphosphate, the first enzymatic step in sulfur assimilation pathway. APS synthesis involves the formation of a high-energy phosphoric-sulfuric acid anhydride bond driven by GTP hydrolysis by CysN coupled to ATP hydrolysis by CysD. The polypeptide is Sulfate adenylyltransferase subunit 2 (Citrifermentans bemidjiense (strain ATCC BAA-1014 / DSM 16622 / JCM 12645 / Bem) (Geobacter bemidjiensis)).